A 257-amino-acid polypeptide reads, in one-letter code: Hydroxyacylglutathione hydrolase (257 aa).

Residues His54, His56, Asp58, His59, His113, Asp137, and His175 each coordinate Zn(2+).

Belongs to the metallo-beta-lactamase superfamily. Glyoxalase II family. Monomer. The cofactor is Zn(2+).

The enzyme catalyses an S-(2-hydroxyacyl)glutathione + H2O = a 2-hydroxy carboxylate + glutathione + H(+). Its pathway is secondary metabolite metabolism; methylglyoxal degradation; (R)-lactate from methylglyoxal: step 2/2. Its function is as follows. Thiolesterase that catalyzes the hydrolysis of S-D-lactoyl-glutathione to form glutathione and D-lactic acid. The chain is Hydroxyacylglutathione hydrolase from Trichodesmium erythraeum (strain IMS101).